The chain runs to 148 residues: Large ribosomal subunit protein uL15 (148 aa).

A disordered region spans residues 1-61 (MELNNLKPAI…GGQMPMQRRL (61 aa)). Residues 30–39 (TATKGHKGQK) are compositionally biased toward basic residues.

The protein belongs to the universal ribosomal protein uL15 family. Part of the 50S ribosomal subunit.

In terms of biological role, binds to the 23S rRNA. This chain is Large ribosomal subunit protein uL15, found in Geobacter metallireducens (strain ATCC 53774 / DSM 7210 / GS-15).